The sequence spans 123 residues: Ribosome-binding factor A (123 aa).

The protein belongs to the RbfA family. In terms of assembly, monomer. Binds 30S ribosomal subunits, but not 50S ribosomal subunits or 70S ribosomes.

The protein localises to the cytoplasm. Functionally, one of several proteins that assist in the late maturation steps of the functional core of the 30S ribosomal subunit. Associates with free 30S ribosomal subunits (but not with 30S subunits that are part of 70S ribosomes or polysomes). Required for efficient processing of 16S rRNA. May interact with the 5'-terminal helix region of 16S rRNA. This chain is Ribosome-binding factor A, found in Neisseria meningitidis serogroup B (strain ATCC BAA-335 / MC58).